Consider the following 193-residue polypeptide: A-type ATP synthase subunit E (193 aa).

This sequence belongs to the V-ATPase E subunit family. Has multiple subunits with at least A(3), B(3), C, D, E, F, H, I and proteolipid K(x).

The protein resides in the cell membrane. Its function is as follows. Component of the A-type ATP synthase that produces ATP from ADP in the presence of a proton gradient across the membrane. The chain is A-type ATP synthase subunit E from Haloquadratum walsbyi (strain DSM 16790 / HBSQ001).